Reading from the N-terminus, the 312-residue chain is Cytochrome c biogenesis protein CcsA (312 aa).

8 helical membrane-spanning segments follow: residues 18–38, 48–68, 73–93, 102–122, 148–168, 216–236, 250–267, and 279–299; these read LGILIFYFLLINLPISLLALF, FFTILINLFIALQLIFRWILS, ISNLYESLYFLVWGISLGQLL, IIPVIAIPIELLTIAFACFVL, VMLSYAALIIGSLLSASVLFI, SILVGFVLLTLGLITGAIWAN, TWAFISWLFYAAYLHMRI, and FATSGFFVVLICYLGVNFLGI.

It belongs to the CcmF/CycK/Ccl1/NrfE/CcsA family. As to quaternary structure, may interact with ccs1.

The protein localises to the cellular thylakoid membrane. Its function is as follows. Required during biogenesis of c-type cytochromes (cytochrome c6 and cytochrome f) at the step of heme attachment. This is Cytochrome c biogenesis protein CcsA from Prochlorococcus marinus (strain MIT 9515).